A 504-amino-acid chain; its full sequence is Cytochrome P450 4A2 (504 aa).

Residues 1–4 constitute a propeptide that is removed on maturation; the sequence is MGFS. Heme is bound at residue glutamate 315. Serine 434 carries the post-translational modification Phosphoserine. Heme is bound at residue cysteine 451.

This sequence belongs to the cytochrome P450 family. Requires heme as cofactor.

It is found in the endoplasmic reticulum membrane. Its subcellular location is the microsome membrane. It catalyses the reaction an omega-methyl-long-chain fatty acid + reduced [NADPH--hemoprotein reductase] + O2 = an omega-hydroxy-long-chain fatty acid + oxidized [NADPH--hemoprotein reductase] + H2O + H(+). The catalysed reaction is dodecanoate + reduced [NADPH--hemoprotein reductase] + O2 = (11R)-hydroxydodecanoate + oxidized [NADPH--hemoprotein reductase] + H2O + H(+). The enzyme catalyses dodecanoate + reduced [NADPH--hemoprotein reductase] + O2 = 12-hydroxydodecanoate + oxidized [NADPH--hemoprotein reductase] + H2O + H(+). It carries out the reaction tetradecanoate + reduced [NADPH--hemoprotein reductase] + O2 = 14-hydroxytetradecanoate + oxidized [NADPH--hemoprotein reductase] + H2O + H(+). It catalyses the reaction hexadecanoate + reduced [NADPH--hemoprotein reductase] + O2 = 16-hydroxyhexadecanoate + oxidized [NADPH--hemoprotein reductase] + H2O + H(+). The protein operates within lipid metabolism; fatty acid metabolism. Its function is as follows. A cytochrome P450 monooxygenase that catalyzes omega and omega-1 hydroxylation of saturated fatty acids. Exhibits preferential omega versus omega-1 regioselectivity and (R) versus (S) stereoselectivity for hydroxylation of lauric and myristic acids. Has low activity toward palmitic acid. Mechanistically, uses molecular oxygen inserting one oxygen atom into a substrate, and reducing the second into a water molecule, with two electrons provided by NADPH via cytochrome P450 reductase (CPR; NADPH-ferrihemoprotein reductase). The protein is Cytochrome P450 4A2 of Rattus norvegicus (Rat).